Reading from the N-terminus, the 714-residue chain is MASATTLLFHHGSTRVLVARRRCQASVLRPYGGLKPFLSFCSLPNSTAPFRDSLRAKSDGLARAYVTGAPPIVEEPDPKIEESKSEAESKDLISWGLLWSLMSKHKLRLSVCLLTLLGCSTCTLSMPVFSGRFFEVLIGVRPEPLWRLLSKIAVLYSLEPIFTIAFVTNMTAIWENVMAILRAQIFRRVLIQKAEFFDKYKVGELTGLLTSDLGALNSIVNDNISRDRGFRAFTEVFGTICILFTLSPQLAPVLGLLMLAVSVLVAVYKRSTVPVYKSHGLAQATMSDCVSETFSAIRTVRSFSGEKRQMSIFGSQILAYKLSGLKLGTFKSINESITRVAVYISLLALYCLGGSKVKTGELAVGTVVSFIGYTFTLTFAVQGLVNTFGDLRGTFAAIDRINSILNAVDIDEALAYGLERDIHTKKVQDENLKLFLSAGPNVNIRHLDKYYMSNLKSTNNLRTLTWAGDVCLDDVHFAYPLRPDVKVLDGLSLTLNSGTVTALVGSSGAGKSTIVQLLARFYEPTQGRITVGGEDVRMFDKSEWAKVVSIVNQEPVLFSLSVAENIAYGLPNEHVSKDDIIKAAKAANAHDFIISLPQGYDTLVGERGGLLSGGQRQRVAIARSLLKNAPILILDEATSALDAVSERLVQSALNRLMKDRTTLVIAHRLSTVQSANQIAVCSDGKIIELGTHSELVAQKGSYASLVGTQRLAFE.

Helical transmembrane passes span 109 to 129, 161 to 181, 240 to 260, 340 to 360, and 361 to 381; these read LSVC…MPVF, IFTI…MAIL, ICIL…LMLA, VAVY…VKTG, and ELAV…TFAV. The ABC transmembrane type-1 domain occupies 109–393; that stretch reads LSVCLLTLLG…LVNTFGDLRG (285 aa). One can recognise an ABC transporter domain in the interval 470–708; sequence VCLDDVHFAY…KGSYASLVGT (239 aa). 505-512 is a binding site for ATP; the sequence is GSSGAGKS.

This sequence belongs to the ABC transporter superfamily. ABCB family. Multidrug resistance exporter (TC 3.A.1.201) subfamily.

It is found in the membrane. The chain is ABC transporter B family member 28 (ABCB28) from Arabidopsis thaliana (Mouse-ear cress).